Reading from the N-terminus, the 132-residue chain is Small ribosomal subunit protein uS8 (132 aa).

It belongs to the universal ribosomal protein uS8 family. In terms of assembly, part of the 30S ribosomal subunit. Contacts proteins S5 and S12.

Its function is as follows. One of the primary rRNA binding proteins, it binds directly to 16S rRNA central domain where it helps coordinate assembly of the platform of the 30S subunit. In Methylocella silvestris (strain DSM 15510 / CIP 108128 / LMG 27833 / NCIMB 13906 / BL2), this protein is Small ribosomal subunit protein uS8.